A 597-amino-acid polypeptide reads, in one-letter code: 66 kDa protein (597 aa).

Disordered regions lie at residues valine 62–glutamine 82, histidine 160–histidine 198, asparagine 218–valine 315, histidine 329–aspartate 411, and serine 535–leucine 586. Positions leucine 64 to serine 80 are enriched in polar residues. Polar residues predominate over residues asparagine 218–leucine 234. The segment covering proline 273–asparagine 291 has biased composition (low complexity). The segment covering serine 305–valine 315 has biased composition (polar residues). Over residues glutamine 389–arginine 400 the composition is skewed to basic residues. The span at serine 535–phenylalanine 574 shows a compositional bias: low complexity. Over residues glycine 575–serine 584 the composition is skewed to polar residues.

Belongs to the tymoviridae protein p69 family.

This Ononis protein is 66 kDa protein.